A 737-amino-acid polypeptide reads, in one-letter code: Polyribonucleotide nucleotidyltransferase (737 aa).

Mg(2+)-binding residues include aspartate 489 and aspartate 495. The region spanning 556–615 (PKIDTIKIDVDKIKIVIGKGGETIDKIIAETGVKIDIDEEGNVSIYSSDQDAINRAKEII) is the KH domain. Residues 625–693 (DEVYRAKVVR…EKGRIDASMK (69 aa)) form the S1 motif domain. The disordered stretch occupies residues 691–737 (SMKALLPRPPKPEHDEKGEKSERPHRPRHHKDHKPKKEFTETPKDSE). Over residues 700–714 (PKPEHDEKGEKSERP) the composition is skewed to basic and acidic residues. Basic residues predominate over residues 715–724 (HRPRHHKDHK). Residues 725–737 (PKKEFTETPKDSE) show a composition bias toward basic and acidic residues.

This sequence belongs to the polyribonucleotide nucleotidyltransferase family. The cofactor is Mg(2+).

Its subcellular location is the cytoplasm. The enzyme catalyses RNA(n+1) + phosphate = RNA(n) + a ribonucleoside 5'-diphosphate. In terms of biological role, involved in mRNA degradation. Catalyzes the phosphorolysis of single-stranded polyribonucleotides processively in the 3'- to 5'-direction. The polypeptide is Polyribonucleotide nucleotidyltransferase (Streptococcus pneumoniae (strain Taiwan19F-14)).